Reading from the N-terminus, the 530-residue chain is Probable histone-arginine methyltransferase CARMER (530 aa).

Residues Ala-141–His-450 form the SAM-dependent MTase PRMT-type domain. The S-adenosyl-L-methionine site is built by Gln-154, Arg-163, Gly-187, Glu-209, Glu-238, and Thr-266. The residue at position 501 (Arg-501) is an Asymmetric dimethylarginine; by autocatalysis.

It belongs to the class I-like SAM-binding methyltransferase superfamily. Protein arginine N-methyltransferase family. Homodimer. Interacts with EcR. In terms of processing, the dimethylated protein is the major form. As to expression, present ubiquitously (at protein level). Expressed in the imaginal disks and in larval brains, and to a much lesser degree in the polytene larval tissue such as salivary glands.

It localises to the cytoplasm. Its subcellular location is the nucleus. The enzyme catalyses L-arginyl-[protein] + 2 S-adenosyl-L-methionine = N(omega),N(omega)-dimethyl-L-arginyl-[protein] + 2 S-adenosyl-L-homocysteine + 2 H(+). Methylates (mono- and asymmetric dimethylation) the guanidino nitrogens of arginyl residues in proteins. May methylate histone H3 at 'Arg-17' and activate transcription via chromatin remodeling. Coordinates ecdysone-mediated expression of cell death genes. This Drosophila melanogaster (Fruit fly) protein is Probable histone-arginine methyltransferase CARMER (Art4).